Reading from the N-terminus, the 428-residue chain is uncharacterized protein (428 aa).

H68 provides a ligand contact to Zn(2+). The Proton acceptor role is filled by E71. Positions 72 and 143 each coordinate Zn(2+).

Belongs to the peptidase M16 family. Requires Zn(2+) as cofactor.

This is an uncharacterized protein from Bacillus subtilis (strain 168).